A 269-amino-acid polypeptide reads, in one-letter code: Ribosomal RNA small subunit methyltransferase J (269 aa).

Residues 125 to 126 (ER) and D179 each bind S-adenosyl-L-methionine.

This sequence belongs to the methyltransferase superfamily. RsmJ family.

It localises to the cytoplasm. The enzyme catalyses guanosine(1516) in 16S rRNA + S-adenosyl-L-methionine = N(2)-methylguanosine(1516) in 16S rRNA + S-adenosyl-L-homocysteine + H(+). Its function is as follows. Specifically methylates the guanosine in position 1516 of 16S rRNA. This is Ribosomal RNA small subunit methyltransferase J from Pseudomonas syringae pv. syringae (strain B728a).